Here is a 115-residue protein sequence, read N- to C-terminus: MKFVLLFGVLLVTLFSYSSAEMLDDFDQADEDELLSLIEKEEARAKECTPRFYDCSHDRHSCCRSELFKDVCTCFYPEGGDNEVCTCQQPKHLKYMEKAAGKAKKFGGKIKKWFG.

Positions 1 to 20 are cleaved as a signal peptide; it reads MKFVLLFGVLLVTLFSYSSA. A propeptide spanning residues 21–44 is cleaved from the precursor; it reads EMLDDFDQADEDELLSLIEKEEAR. 4 disulfides stabilise this stretch: Cys-48–Cys-63, Cys-55–Cys-72, Cys-62–Cys-87, and Cys-74–Cys-85.

It belongs to the neurotoxin 19 (CSTX) family. 01 subfamily. Expressed by the venom gland.

The protein localises to the secreted. In Lycosa singoriensis (Wolf spider), this protein is U3-lycotoxin-Ls1k.